Reading from the N-terminus, the 704-residue chain is Glycogen [starch] synthase, liver (704 aa).

2 positions are modified to phosphoserine: serine 8 and serine 11. UDP is bound at residue lysine 40. The UDP-alpha-D-glucose site is built by histidine 205 and arginine 211. 5 residues coordinate alpha-D-glucose 6-phosphate: histidine 291, glutamate 292, glutamine 294, histidine 297, and lysine 301. Position 331 (arginine 331) interacts with UDP. Position 331 (arginine 331) interacts with UDP-alpha-D-glucose. Histidine 501 contacts alpha-D-glucose 6-phosphate. Positions 510, 512, and 513 each coordinate UDP-alpha-D-glucose. Threonine 515 contributes to the UDP binding site. Alpha-D-glucose 6-phosphate-binding residues include arginine 582 and arginine 586. The disordered stretch occupies residues 620–704 (KFHLEPTSPP…KKKLHGEYKN (85 aa)). Serine 627 is modified (phosphoserine). Phosphoserine; by GSK3-alpha and GSK3-beta is present on residues serine 641, serine 645, serine 649, and serine 653. The segment covering 647–657 (SGSQTSSPQSS) has biased composition (low complexity). Serine 657 is modified (phosphoserine; by CK2). Residues 659–675 (VENEGDEDERYDEEEEA) are compositionally biased toward acidic residues. Serine 684 carries the phosphoserine modification.

It belongs to the glycosyltransferase 3 family. In terms of assembly, part of the glycogen synthase (GS)-glycogenin complex, a heterooctamer composed of a tetramer of GS and 2 dimers of glycogenin, where each GS protomer binds to one glycogenin subunit (via glycogenin C-terminus); the GS tetramer may dissociate from glycogenin dimers to continue glycogen polymerization on its own. May also form a heterooctamer complex with GYG1 (via GYG1 C-terminus). In terms of processing, primed phosphorylation at Ser-657 (site 5) by CSNK2A1 and CSNK2A2 is required for inhibitory phosphorylation at Ser-641 (site 3a), Ser-645 (site 3b), Ser-649 (site 3c) and Ser-653 (site 4) by GSK3A an GSK3B. Dephosphorylation at Ser-641 and Ser-645 by PP1 activates the enzyme. Phosphorylation at Ser-8 is not required for interaction with GYG1. Interaction with GYG1 does not regulate the phosphorylation at Ser-8 and Ser-641. Specifically expressed in liver (at protein level).

The enzyme catalyses [(1-&gt;4)-alpha-D-glucosyl](n) + UDP-alpha-D-glucose = [(1-&gt;4)-alpha-D-glucosyl](n+1) + UDP + H(+). It participates in glycan biosynthesis; glycogen biosynthesis. Its activity is regulated as follows. Allosteric activation by glucose-6-phosphate. Phosphorylation reduces the activity towards UDP-glucose. When in the non-phosphorylated state, glycogen synthase does not require glucose-6-phosphate as an allosteric activator; when phosphorylated it does. In terms of biological role, glycogen synthase participates in the glycogen biosynthetic process along with glycogenin and glycogen branching enzyme. Extends the primer composed of a few glucose units formed by glycogenin by adding new glucose units to it. In this context, glycogen synthase transfers the glycosyl residue from UDP-Glc to the non-reducing end of alpha-1,4-glucan. The sequence is that of Glycogen [starch] synthase, liver from Rattus norvegicus (Rat).